We begin with the raw amino-acid sequence, 393 residues long: Nucleoside permease NupC (393 aa).

The next 9 membrane-spanning stretches (helical) occupy residues 3-23 (YLIG…ASSG), 32-52 (IVVM…TGIG), 87-107 (TTFF…IGIL), 168-188 (LCAS…MTML), 191-211 (EYVV…ASII), 249-269 (VVVA…NGIF), 272-292 (VFGI…AFLV), 334-354 (AIVS…IIAG), and 372-392 (LKLL…VGLI).

The protein belongs to the concentrative nucleoside transporter (CNT) (TC 2.A.41) family.

The protein resides in the cell membrane. Its function is as follows. Transport of the pyrimidine nucleoside uridine. The chain is Nucleoside permease NupC from Bacillus subtilis (strain 168).